The sequence spans 387 residues: Mannitol-1-phosphate 5-dehydrogenase (387 aa).

3 to 14 (ALHFGAGNIGRG) provides a ligand contact to NAD(+).

The protein belongs to the mannitol dehydrogenase family.

It carries out the reaction D-mannitol 1-phosphate + NAD(+) = beta-D-fructose 6-phosphate + NADH + H(+). The chain is Mannitol-1-phosphate 5-dehydrogenase from Yersinia pseudotuberculosis serotype O:3 (strain YPIII).